Reading from the N-terminus, the 444-residue chain is uncharacterized protein (444 aa).

Residues 1–72 (MGFLTAAIRV…RPMWNVSFLR (72 aa)) constitute a chloroplast transit peptide. The segment at 77–107 (HSTPARETGDDDISKSENSSSQDGDSCTKLK) is disordered. The segment covering 92–101 (SENSSSQDGD) has biased composition (polar residues). In terms of domain architecture, CRM spans 175–272 (EILTPEEHFY…KNYVQPPTEI (98 aa)). Residues 292 to 355 (DALRAVRKYI…CLEDEQEEDE (64 aa)) are a coiled coil. Disordered regions lie at residues 344–364 (EECLEDEQEEDEAGLELATDS) and 392–426 (KFPAINNREDEDFGDLGKAKSEGEENDDDKSPNFD). A compositionally biased stretch (acidic residues) spans 346-357 (CLEDEQEEDEAG). Positions 406–426 (DLGKAKSEGEENDDDKSPNFD) are enriched in basic and acidic residues.

Its subcellular location is the plastid. The protein resides in the chloroplast. This is an uncharacterized protein from Arabidopsis thaliana (Mouse-ear cress).